A 318-amino-acid chain; its full sequence is Taste receptor type 2 member 60 (318 aa).

The Extracellular portion of the chain corresponds to 1–7; sequence MNGDHMV. The helical transmembrane segment at 8–28 threads the bilayer; the sequence is LGSSVTDQKAIILVIILLLLC. The Cytoplasmic portion of the chain corresponds to 29-40; it reads LVAIAGNGFITA. Residues 41–61 traverse the membrane as a helical segment; sequence ALGVEWVLRGTLLPCDKLLVS. The Extracellular portion of the chain corresponds to 62-88; the sequence is LRASRFCLQWVVMGKTIYVLLYPTAFP. The chain crosses the membrane as a helical span at residues 89–109; the sequence is YNPVLQFLAFQWDFLNAATLW. Topologically, residues 110 to 128 are cytoplasmic; the sequence is FSSWLSVFYCVKIATFTHP. A helical membrane pass occupies residues 129–149; that stretch reads VFLWLKHKLSEWVPWMFFSSV. Residues 150–183 are Extracellular-facing; the sequence is GLSSFTTILFFIGNHSIYQNYLRNHLQPWNVTGN. N-linked (GlcNAc...) asparagine glycosylation is found at N163 and N179. A helical membrane pass occupies residues 184–204; the sequence is SIWSYCEKFYLFPVKMITWTM. Residues 205–234 lie on the Cytoplasmic side of the membrane; it reads PTAVFFICMILLITSLGRHMEKALLTTSGF. The chain crosses the membrane as a helical span at residues 235-255; sequence REPSVQAHVKALLALLSLAML. At 256–264 the chain is on the extracellular side; that stretch reads FISYFLSLV. A helical transmembrane segment spans residues 265–285; the sequence is LSAAGIFPPLDFKFWVGESVI. The Cytoplasmic segment spans residues 286–318; sequence YLCAGVHPIILLFSNRRLRAVLERCRSSRCRTP.

This sequence belongs to the G-protein coupled receptor T2R family.

It localises to the membrane. Its function is as follows. Receptor that may play a role in the perception of bitterness and is gustducin-linked. May play a role in sensing the chemical composition of the gastrointestinal content. The activity of this receptor may stimulate alpha gustducin, mediate PLC-beta-2 activation and lead to the gating of TRPM5. This is Taste receptor type 2 member 60 (TAS2R60) from Macaca mulatta (Rhesus macaque).